Reading from the N-terminus, the 299-residue chain is GTPase Era (299 aa).

The 168-residue stretch at 4-171 (KSGFVAILGR…VDILSENLDE (168 aa)) folds into the Era-type G domain. A G1 region spans residues 12–19 (GRPNVGKS). 12–19 (GRPNVGKS) is a GTP binding site. Positions 38-42 (XTTRN) are G2. The G3 stretch occupies residues 59 to 62 (DTPG). GTP contacts are provided by residues 59–63 (DTPGI) and 121–124 (NKID). The segment at 121-124 (NKID) is G4. Positions 150 to 152 (ISA) are G5. The 79-residue stretch at 202–280 (TREEIPHSVA…FLETWVKVKK (79 aa)) folds into the KH type-2 domain.

This sequence belongs to the TRAFAC class TrmE-Era-EngA-EngB-Septin-like GTPase superfamily. Era GTPase family. Monomer.

It is found in the cytoplasm. The protein resides in the cell membrane. Its function is as follows. An essential GTPase that binds both GDP and GTP, with rapid nucleotide exchange. Plays a role in 16S rRNA processing and 30S ribosomal subunit biogenesis and possibly also in cell cycle regulation and energy metabolism. This is GTPase Era from Streptococcus pneumoniae serotype 19F (strain G54).